The chain runs to 486 residues: Surface lipoprotein assembly modifier (486 aa).

The N-terminal stretch at 1-29 (MKNGVKQISFLSLIGLSLIGLSLTNIAWA) is a signal peptide. Residues 30 to 197 (KVARPKNDTL…QYLLTLNQRN (168 aa)) form an N-terminal domain region. The C-terminal probable beta barrel stretch occupies residues 198–486 (QWIWQVGLNF…RIYLEIGKIF (289 aa)). Transmembrane regions (beta stranded) follow at residues 199 to 209 (WIWQVGLNFLN), 237 to 248 (GRVFFISRKKWP), 253 to 262 (FFSKTMFNGN), 276 to 286 (TLRIGGGLGYQ), 290 to 300 (VEVSLFPFQEK), 320 to 330 (LGIRLENVDWL), 334 to 344 (WQISTALEYGE), 358 to 367 (YFISSTLFYL), 373 to 382 (FWFVGMDFHR), 395 to 404 (KTLRLGWGQD), 409 to 419 (ISSRLTFSYAN), 437 to 446 (YATTITLWHR), 453 to 463 (LTPKLSWDYQK), and 476 to 486 (NRIYLEIGKIF).

It belongs to the Slam family.

The protein localises to the cell outer membrane. Its function is as follows. Required for correct export to the cell surface of some cell outer membrane lipoproteins (tested with TpbP) upon heterologous expression in E.coli and probably also in Haemophilus. The protein is Surface lipoprotein assembly modifier of Haemophilus influenzae (strain 86-028NP).